We begin with the raw amino-acid sequence, 439 residues long: Methylenetetrahydrofolate--tRNA-(uracil-5-)-methyltransferase TrmFO (439 aa).

Position 8–13 (8–13) interacts with FAD; the sequence is GGGLAG.

This sequence belongs to the MnmG family. TrmFO subfamily. It depends on FAD as a cofactor.

It localises to the cytoplasm. It carries out the reaction uridine(54) in tRNA + (6R)-5,10-methylene-5,6,7,8-tetrahydrofolate + NADH + H(+) = 5-methyluridine(54) in tRNA + (6S)-5,6,7,8-tetrahydrofolate + NAD(+). The enzyme catalyses uridine(54) in tRNA + (6R)-5,10-methylene-5,6,7,8-tetrahydrofolate + NADPH + H(+) = 5-methyluridine(54) in tRNA + (6S)-5,6,7,8-tetrahydrofolate + NADP(+). In terms of biological role, catalyzes the folate-dependent formation of 5-methyl-uridine at position 54 (M-5-U54) in all tRNAs. The chain is Methylenetetrahydrofolate--tRNA-(uracil-5-)-methyltransferase TrmFO from Dictyoglomus turgidum (strain DSM 6724 / Z-1310).